Here is a 126-residue protein sequence, read N- to C-terminus: Aspartate 1-decarboxylase (126 aa).

Ser-25 functions as the Schiff-base intermediate with substrate; via pyruvic acid in the catalytic mechanism. Ser-25 carries the post-translational modification Pyruvic acid (Ser). Thr-57 contacts substrate. Residue Tyr-58 is the Proton donor of the active site. A substrate-binding site is contributed by Gly-73–Ala-75.

The protein belongs to the PanD family. In terms of assembly, heterooctamer of four alpha and four beta subunits. It depends on pyruvate as a cofactor. Post-translationally, is synthesized initially as an inactive proenzyme, which is activated by self-cleavage at a specific serine bond to produce a beta-subunit with a hydroxyl group at its C-terminus and an alpha-subunit with a pyruvoyl group at its N-terminus.

It localises to the cytoplasm. The enzyme catalyses L-aspartate + H(+) = beta-alanine + CO2. Its pathway is cofactor biosynthesis; (R)-pantothenate biosynthesis; beta-alanine from L-aspartate: step 1/1. Its function is as follows. Catalyzes the pyruvoyl-dependent decarboxylation of aspartate to produce beta-alanine. The polypeptide is Aspartate 1-decarboxylase (Methylobacillus flagellatus (strain ATCC 51484 / DSM 6875 / VKM B-1610 / KT)).